A 571-amino-acid polypeptide reads, in one-letter code: Asparagine--tRNA ligase, cytoplasmic 3 (571 aa).

An N-acetylglycine modification is found at Gly-2. Residues 50 to 128 (VRIGGWVKTG…QSIELSVETV (79 aa)) constitute a DNA-binding region (OB). The region spanning 233–289 (DVEAARLIVKERGEAVAQLKVAKASKEEITASVAQLSVAKASLAHVEERLRLKPGLP) is the WHEP-TRS domain.

This sequence belongs to the class-II aminoacyl-tRNA synthetase family.

The protein localises to the cytoplasm. It is found in the cytosol. The catalysed reaction is tRNA(Asn) + L-asparagine + ATP = L-asparaginyl-tRNA(Asn) + AMP + diphosphate + H(+). The sequence is that of Asparagine--tRNA ligase, cytoplasmic 3 from Arabidopsis thaliana (Mouse-ear cress).